The following is a 232-amino-acid chain: tRNA (guanine-N(1)-)-methyltransferase (232 aa).

Residues glycine 112 and 132-137 contribute to the S-adenosyl-L-methionine site; that span reads IGDYIL.

Belongs to the RNA methyltransferase TrmD family. In terms of assembly, homodimer.

It is found in the cytoplasm. It catalyses the reaction guanosine(37) in tRNA + S-adenosyl-L-methionine = N(1)-methylguanosine(37) in tRNA + S-adenosyl-L-homocysteine + H(+). Its function is as follows. Specifically methylates guanosine-37 in various tRNAs. This Methylacidiphilum infernorum (isolate V4) (Methylokorus infernorum (strain V4)) protein is tRNA (guanine-N(1)-)-methyltransferase.